A 485-amino-acid polypeptide reads, in one-letter code: Putative E3 ubiquitin-protein ligase makorin-4 (485 aa).

The span at 1 to 32 (MAEAAAPGTTVTTSGAGAAAAEAAETAEAVSP) shows a compositional bias: low complexity. The disordered stretch occupies residues 1-63 (MAEAAAPGTT…GSDGSGGRGD (63 aa)). Residues 45–63 (AGGGVGGSDGSDGSGGRGD) are compositionally biased toward gly residues. 3 consecutive C3H1-type zinc fingers follow at residues 90-117 (WTKQVTCRYFKYGICKEGDNCRYSHDLS), 124-146 (VCKYFQRGCCVYGDRCRCEHSKP), and 243-270 (ETKKQLCPYAAVGQCRYGENCVYLHGDL). The segment at 271 to 298 (CDMCGLQVLHPMDAAQRSQHIQACIEAH) is makorin-type Cys-His. The segment at 316–370 (CGICMEVVYEKANPNEHRFGILSNCNHTFCLKCIRKWRSAKEFESRIVKSCPQCR) adopts an RING-type zinc-finger fold. The segment at 399–428 (AMSNKACKYFDEGRGSCPFGENCFYKHMYP) adopts a C3H1-type 4 zinc-finger fold.

It catalyses the reaction S-ubiquitinyl-[E2 ubiquitin-conjugating enzyme]-L-cysteine + [acceptor protein]-L-lysine = [E2 ubiquitin-conjugating enzyme]-L-cysteine + N(6)-ubiquitinyl-[acceptor protein]-L-lysine.. Its pathway is protein modification; protein ubiquitination. Its function is as follows. May act as a E3 ubiquitin ligase catalyzing the covalent attachment of ubiquitin moieties onto substrate proteins. This is Putative E3 ubiquitin-protein ligase makorin-4 (MKRN4P) from Homo sapiens (Human).